The following is a 373-amino-acid chain: ORC1-type DNA replication protein 2 (373 aa).

Residues 63-67 (TGKTS), Tyr205, and Arg217 each bind ATP.

It belongs to the CDC6/cdc18 family.

Involved in regulation of DNA replication. The protein is ORC1-type DNA replication protein 2 (cdc6-2) of Methanosarcina mazei (strain ATCC BAA-159 / DSM 3647 / Goe1 / Go1 / JCM 11833 / OCM 88) (Methanosarcina frisia).